Here is a 79-residue protein sequence, read N- to C-terminus: Putative defensin-like protein 309 (79 aa).

An N-terminal signal peptide occupies residues 1-19 (MKILAFFIFVLLIFSCSSS). 3 disulfides stabilise this stretch: cysteine 31–cysteine 50, cysteine 37–cysteine 55, and cysteine 41–cysteine 57.

The protein belongs to the DEFL family.

Its subcellular location is the secreted. The polypeptide is Putative defensin-like protein 309 (Arabidopsis thaliana (Mouse-ear cress)).